We begin with the raw amino-acid sequence, 30 residues long: Snaclec coagulation factor IX/factor X-binding protein subunit B (30 aa).

Cysteines 2 and 13 form a disulfide. Residues 9–30 (YEGHCYRVFTEPQNWADAEKFC) form the C-type lectin domain.

This sequence belongs to the snaclec family. As to quaternary structure, heterodimer of subunits A and B; disulfide-linked. Glycosylated. As to expression, expressed by the venom gland.

Its subcellular location is the secreted. Functionally, anticoagulant protein which binds to the gamma-carboxyglutamic acid-domain regions of factors IX (F9) and factor X (F10) in the presence of calcium with a 1 to 1 stoichiometry. In Bothrops jararaca (Jararaca), this protein is Snaclec coagulation factor IX/factor X-binding protein subunit B.